A 572-amino-acid polypeptide reads, in one-letter code: Excitatory amino acid transporter 2 (572 aa).

Over residues 1–11 the composition is skewed to polar residues; that stretch reads MASTEGANNMP. Residues 1-28 are disordered; sequence MASTEGANNMPKQVEVRMHDSHLSSDEP. Topologically, residues 1-44 are cytoplasmic; it reads MASTEGANNMPKQVEVRMHDSHLSSDEPKHRNLGMRMCDKLGKN. Ser3, Ser21, Ser24, and Ser25 each carry phosphoserine. The segment covering 14 to 28 has biased composition (basic and acidic residues); it reads VEVRMHDSHLSSDEP. Residue Cys38 is the site of S-palmitoyl cysteine attachment. Transmembrane regions (helical) follow at residues 45–64, 88–108, and 121–142; these read LLLSLTVFGVILGAVCGGLL, MLKMLILPLIISSLITGLSGL, and MVYYMSTTIIAAVLGVILVLAI. Asn205 and Asn215 each carry an N-linked (GlcNAc...) asparagine glycan. A run of 3 helical transmembrane segments spans residues 235-258, 268-295, and 317-338; these read FKDGMNVLGLIGFFIAFGIAMGKM, FFNILNEIVMKLVIMIMWYSPLGIACLI, and ITVIVGLIIHGGIFLPLIYFVV. The segment at residues 344-374 is an intramembrane region (discontinuously helical); it reads FSFFAGIFQAWITALGTASSAGTLPVTFRCL. Position 361–363 (361–363) interacts with L-aspartate; that stretch reads ASS. The helical transmembrane segment at 384-410 threads the bilayer; it reads VTRFVLPVGATINMDGTALYEAVAAIF. The Na(+) site is built by Gly392, Thr394, and Asn396. Residues Thr400, 441–445, Asp474, and Asn481 contribute to the L-aspartate site; that span reads IPSAG. Positions 424-457 form an intramembrane region, discontinuously helical; the sequence is IVTVSLTATLASIGAASIPSAGLVTMLLILTAVG. The chain crosses the membrane as a helical span at residues 471 to 492; the sequence is WLLDRMRTSVNVVGDSFGAGIV. 2 residues coordinate Na(+): Asn481 and Asp485. A phosphoserine mark is found at Ser505, Ser520, Ser530, and Ser532. Position 537 is a phosphotyrosine (Tyr537). Phosphoserine occurs at positions 542, 558, and 562.

It belongs to the dicarboxylate/amino acid:cation symporter (DAACS) (TC 2.A.23) family. SLC1A2 subfamily. In terms of assembly, homotrimer. Interacts with AJUBA. Post-translationally, glycosylated. In terms of processing, palmitoylation at Cys-38 is not required for correct subcellular localization, but is important for glutamate uptake activity. Detected in brain. Detected in embryonic forebrain, especially in globus pallidus, perirhinal cortex, lateral hypothalamus, hippocampus, and on fimbria and axonal pathways connecting the neocortex, basal ganglia and thalamus (at protein level). Isoform GLT1 is expressed in the brain. Isoforms GLT-1A and GLT-1B are expressed in the liver.

It is found in the cell membrane. The enzyme catalyses K(+)(in) + L-glutamate(out) + 3 Na(+)(out) + H(+)(out) = K(+)(out) + L-glutamate(in) + 3 Na(+)(in) + H(+)(in). It catalyses the reaction K(+)(in) + L-aspartate(out) + 3 Na(+)(out) + H(+)(out) = K(+)(out) + L-aspartate(in) + 3 Na(+)(in) + H(+)(in). The catalysed reaction is D-aspartate(out) + K(+)(in) + 3 Na(+)(out) + H(+)(out) = D-aspartate(in) + K(+)(out) + 3 Na(+)(in) + H(+)(in). Functionally, sodium-dependent, high-affinity amino acid transporter that mediates the uptake of L-glutamate and also L-aspartate and D-aspartate. Functions as a symporter that transports one amino acid molecule together with two or three Na(+) ions and one proton, in parallel with the counter-transport of one K(+) ion. Mediates Cl(-) flux that is not coupled to amino acid transport; this avoids the accumulation of negative charges due to aspartate and Na(+) symport. Essential for the rapid removal of released glutamate from the synaptic cleft, and for terminating the postsynaptic action of glutamate. The polypeptide is Excitatory amino acid transporter 2 (Slc1a2) (Mus musculus (Mouse)).